Here is a 1142-residue protein sequence, read N- to C-terminus: MGPKGKKKGQSFDDSDEEINNKKGGNKKGQQLEDDIPQPVKKGGNKKGQRGKQDSDDEPENIPQPVAKKSNNKKGQRGKQDSDDEQDEIPQPQKKGGKPAPQPQKKGGKQQDSDDEQDEIPQPVKKGGKPAPQKKGGKQQQQQDSDDEQEEIPQPVKKGGKPAPQKKGGKQQDSDDEEDEIPQPVKKGGKPAPQKKGGKQQESEDEDEEDEVQQPVKKGGKNDKKKGVKHVEEEEEEEEEEEIEQPVKKGGKAPKPKKGGKGSKQESEDEEDDVQQPVKKGGKKDKKKGSKHVEEEEEEEEEEEIEQPVKKGSNKKDQKKGGKGKHVEEEEEEEEEEEIEQPVKKGSNKKDQKKGGKGKQQQESEDEEEEIQQPVKKGGKKDKKKGSKHVEEEEEEEEEEEEIEQPVKKGGKKDKKSSLEDSMSELSIKSKKGGKGKHVEEEEEQEQEEEEEKPKSKSNKKDKKKGKHVEEEEEEEEEEEEKPKSKSNKKDKKKGSKHIEEEEEEEEEEEEEEKEEEEEKKMTLAEIRAAKKVKKVDKKEKKKEKEKKKRDEQEEDAFELAKKKQQEEIDYDNIDIDDVPGKDAPTYVHLKSSEGLRSKIGNDIKFDNLILSVPGRILLNNASLTLAYGQKYGFVGRNGIGKSTLVKKIAMRDEITIAPHLRVLYVEQEVTGDDTTPLDCVLAADEERKWLLDEEKVLTELEKVNPSWQFDPRQKRNYSLRDIYDRLKEIDADKASIRAANILIGLGFTFEEISVKKSRDYSGGWRMRIALARALFCKPEVLLLDEPSNHLDLHACVWLEKYLNQWDRTLLVVSHEASFLNEVVDNIIYIHDQKLDQYRGNYDAFMKQKSVNLRSKEKEKDKQDRKLKKMNEFITKNKNNTQAKQAASRAKKMEKIETIELEREDASLVVDFPQPEHLTPPLLVFKDVCFGYEGRPTMFKKLDIGIDMDSKIALVGMNGVGKSTLMKLMNGDLHETTGYIERSRKMRVARFSQHFVDQLDTTMTPIEYFQSKFNNPPVQQIRNHLGRFGICNSLPLHKITTLSGGQKSRVILAELAWAEPHILLLDEPTNHLDIDAIEALAEGINAFTGGVVLISHNQHLINLIAEQIWVVKKDGTIYLYPGTFMDYKNEISREIDNMVIRS.

Residues 1–564 (MGPKGKKKGQ…EDAFELAKKK (564 aa)) form a disordered region. 3 stretches are compositionally biased toward low complexity: residues 121-143 (PQPV…QQQQ), 153-166 (PQPV…APQK), and 182-195 (PQPV…APQK). Acidic residues-rich tracts occupy residues 203 to 212 (SEDEDEEDEV) and 233 to 244 (EEEEEEEEEEIE). Composition is skewed to basic residues over residues 249 to 261 (KGGK…KGGK) and 280 to 290 (KGGKKDKKKGS). Residues 295 to 306 (EEEEEEEEEEIE) show a composition bias toward acidic residues. A compositionally biased stretch (basic and acidic residues) spans 314 to 328 (NKKDQKKGGKGKHVE). Acidic residues predominate over residues 329–340 (EEEEEEEEEEIE). Positions 377-387 (KGGKKDKKKGS) are enriched in basic residues. Acidic residues-rich tracts occupy residues 392–404 (EEEE…EEIE) and 441–451 (EEEEQEQEEEE). Basic residues predominate over residues 456–467 (SKSNKKDKKKGK). Positions 471–480 (EEEEEEEEEE) are enriched in acidic residues. Positions 485 to 496 (SKSNKKDKKKGS) are enriched in basic residues. The segment covering 501 to 518 (EEEEEEEEEEEEEKEEEE) has biased composition (acidic residues). A compositionally biased stretch (basic residues) spans 530–548 (AKKVKKVDKKEKKKEKEKK). 2 ABC transporter domains span residues 604–857 (IKFD…RSKE) and 923–1139 (LVFK…DNMV). Residues 636–643 (GRNGIGKS) and 956–963 (GMNGVGKS) each bind ATP.

It belongs to the ABC transporter superfamily.

In Dictyostelium discoideum (Social amoeba), this protein is ABC transporter F family member 4 (abcF4).